Reading from the N-terminus, the 326-residue chain is Homeobox protein Hox-A1 (326 aa).

The Antp-type hexapeptide signature appears at 196–201 (TFDWMK). A DNA-binding region (homeobox) is located at residues 221–280 (PNTVRTNFTTKQLTELEKEFHFNKYLTRARRVEIAAALQLNETQVKIWFQNRRMKQKKRE). Positions 273-326 (RMKQKKREKEGLTSASPATPGSEANTEDTSDKCNSTSSTPSPSSSTSETINTSG) are disordered. Polar residues predominate over residues 285–296 (TSASPATPGSEA). Low complexity predominate over residues 306–326 (NSTSSTPSPSSSTSETINTSG).

This sequence belongs to the Antp homeobox family. Labial subfamily.

It localises to the nucleus. Sequence-specific transcription factor. Part of a developmental regulatory system that provides cells with specific positional identities on the anterior-posterior axis. Acts on the anterior body structures. Seems to act in the maintenance and/or generation of hindbrain segments. The chain is Homeobox protein Hox-A1 (HOXA1) from Heterodontus francisci (Horn shark).